Reading from the N-terminus, the 205-residue chain is High frequency lysogenization protein HflD homolog (205 aa).

This sequence belongs to the HflD family.

Its subcellular location is the cytoplasm. The protein resides in the cell inner membrane. This chain is High frequency lysogenization protein HflD homolog, found in Shewanella baltica (strain OS185).